A 118-amino-acid chain; its full sequence is UPF0342 protein LCK_01004 (118 aa).

The protein belongs to the UPF0342 family.

In Leuconostoc citreum (strain KM20), this protein is UPF0342 protein LCK_01004.